We begin with the raw amino-acid sequence, 435 residues long: Trigger factor (435 aa).

The disordered stretch occupies residues 125–147; sequence MEVPEQDTSVSDADVDSELENKR. Positions 164–249 constitute a PPIase FKBP-type domain; the sequence is GDTVVIDYEG…IHEVKEKQLP (86 aa).

It belongs to the FKBP-type PPIase family. Tig subfamily.

The protein resides in the cytoplasm. It carries out the reaction [protein]-peptidylproline (omega=180) = [protein]-peptidylproline (omega=0). Its function is as follows. Involved in protein export. Acts as a chaperone by maintaining the newly synthesized protein in an open conformation. Functions as a peptidyl-prolyl cis-trans isomerase. The polypeptide is Trigger factor (Limosilactobacillus fermentum (strain NBRC 3956 / LMG 18251) (Lactobacillus fermentum)).